Reading from the N-terminus, the 339-residue chain is NADH-quinone oxidoreductase subunit H (339 aa).

8 helical membrane-spanning segments follow: residues I9–C29, I82–I102, V115–G135, M161–V181, M187–L207, M235–T255, I275–I295, and G311–I331.

Belongs to the complex I subunit 1 family. NDH-1 is composed of 14 different subunits. Subunits NuoA, H, J, K, L, M, N constitute the membrane sector of the complex.

The protein localises to the cell inner membrane. The catalysed reaction is a quinone + NADH + 5 H(+)(in) = a quinol + NAD(+) + 4 H(+)(out). Functionally, NDH-1 shuttles electrons from NADH, via FMN and iron-sulfur (Fe-S) centers, to quinones in the respiratory chain. The immediate electron acceptor for the enzyme in this species is believed to be ubiquinone. Couples the redox reaction to proton translocation (for every two electrons transferred, four hydrogen ions are translocated across the cytoplasmic membrane), and thus conserves the redox energy in a proton gradient. This subunit may bind ubiquinone. This is NADH-quinone oxidoreductase subunit H from Rickettsia bellii (strain OSU 85-389).